A 460-amino-acid polypeptide reads, in one-letter code: Squalene synthase (460 aa).

Residues 425–445 (ISILFVFFIILVCLAVIFYVF) traverse the membrane as a helical segment.

The protein belongs to the phytoene/squalene synthase family. In terms of assembly, interacts with pof14. Requires Mg(2+) as cofactor.

Its subcellular location is the endoplasmic reticulum membrane. It carries out the reaction 2 (2E,6E)-farnesyl diphosphate + NADPH + H(+) = squalene + 2 diphosphate + NADP(+). It catalyses the reaction 2 (2E,6E)-farnesyl diphosphate + NADH + H(+) = squalene + 2 diphosphate + NAD(+). It functions in the pathway terpene metabolism; lanosterol biosynthesis; lanosterol from farnesyl diphosphate: step 1/3. Its pathway is steroid metabolism; ergosterol biosynthesis. Squalene synthase; part of the third module of ergosterol biosynthesis pathway that includes by the late steps of the pathway. Erg9 produces squalene from 2 farnesyl pyrophosphate moieties. The third module or late pathway involves the ergosterol synthesis itself through consecutive reactions that mainly occur in the endoplasmic reticulum (ER) membrane. Firstly, the squalene synthase erg9 catalyzes the condensation of 2 farnesyl pyrophosphate moieties to form squalene, which is the precursor of all steroids. Secondly, squalene is converted into lanosterol by the consecutive action of the squalene epoxidase erg1 and the lanosterol synthase erg7. The lanosterol 14-alpha-demethylase erg11/cyp1 catalyzes C14-demethylation of lanosterol to produce 4,4'-dimethyl cholesta-8,14,24-triene-3-beta-ol. In the next steps, a complex process involving various demethylation, reduction and desaturation reactions catalyzed by the C-14 reductase erg24 and the C-4 demethylation complex erg25-erg26-erg27 leads to the production of zymosterol. Erg28 likely functions in the C-4 demethylation complex reaction by tethering erg26 and Erg27 to the endoplasmic reticulum or to facilitate interaction between these proteins. Then, the sterol 24-C-methyltransferase erg6 catalyzes the methyl transfer from S-adenosyl-methionine to the C-24 of zymosterol to form fecosterol. The C-8 sterol isomerase erg2 catalyzes the reaction which results in unsaturation at C-7 in the B ring of sterols and thus converts fecosterol to episterol. The sterol-C5-desaturases erg31 and erg32 then catalyze the introduction of a C-5 double bond in the B ring to produce 5-dehydroepisterol. The C-22 sterol desaturase erg5 further converts 5-dehydroepisterol into ergosta-5,7,22,24(28)-tetraen-3beta-ol by forming the C-22(23) double bond in the sterol side chain. Finally, ergosta-5,7,22,24(28)-tetraen-3beta-ol is substrate of the C-24(28) sterol reductase erg4 to produce ergosterol. In the genus Schizosaccharomyces, a second route exists between lanosterol and fecosterol, via the methylation of lanosterol to eburicol by erg6, followed by C14-demethylation by erg11/cyp1 and C4-demethylation by the demethylation complex erg25-erg26-erg27. This is Squalene synthase from Schizosaccharomyces pombe (strain 972 / ATCC 24843) (Fission yeast).